We begin with the raw amino-acid sequence, 277 residues long: Small ribosomal subunit protein uS3 (277 aa).

Residues 43–111 (IRQLMSTGME…QVQLNILEVK (69 aa)) enclose the KH type-2 domain. A compositionally biased stretch (low complexity) spans 218–228 (QQAAAAPSRGR). The tract at residues 218-277 (QQAAAAPSRGRGASDRPGRPGGADRGDRRRRTDRPAAEAAPAAEAPAVEAAAPAVEGGQA) is disordered. Positions 229–244 (GASDRPGRPGGADRGD) are enriched in basic and acidic residues. The segment covering 254 to 277 (AEAAPAAEAPAVEAAAPAVEGGQA) has biased composition (low complexity).

It belongs to the universal ribosomal protein uS3 family. In terms of assembly, part of the 30S ribosomal subunit. Forms a tight complex with proteins S10 and S14.

Its function is as follows. Binds the lower part of the 30S subunit head. Binds mRNA in the 70S ribosome, positioning it for translation. This Arthrobacter sp. (strain FB24) protein is Small ribosomal subunit protein uS3.